A 701-amino-acid chain; its full sequence is Elongation factor G (701 aa).

The tr-type G domain occupies 8 to 291; sequence SRYRNIGIVA…AVIDFLPAPT (284 aa). GTP contacts are provided by residues 17-24, 89-93, and 143-146; these read AHVDAGKT, DTPGH, and NKMD.

It belongs to the TRAFAC class translation factor GTPase superfamily. Classic translation factor GTPase family. EF-G/EF-2 subfamily.

It is found in the cytoplasm. In terms of biological role, catalyzes the GTP-dependent ribosomal translocation step during translation elongation. During this step, the ribosome changes from the pre-translocational (PRE) to the post-translocational (POST) state as the newly formed A-site-bound peptidyl-tRNA and P-site-bound deacylated tRNA move to the P and E sites, respectively. Catalyzes the coordinated movement of the two tRNA molecules, the mRNA and conformational changes in the ribosome. This Pseudomonas fluorescens (strain Pf0-1) protein is Elongation factor G.